The chain runs to 179 residues: Putative FBD-associated F-box protein At3g12840 (179 aa).

An F-box domain is found at 14-60 (AARINDLPDDLLATVLSFVPTKDAVATSILSKRWRPIWKRAVNLESD). Residues 101–152 (KWKQPDFVPLSLYRSLEAFEWIGFKGREKTEKKAAFHILRNACNLKTMAITT) enclose the FBD domain.

The chain is Putative FBD-associated F-box protein At3g12840 from Arabidopsis thaliana (Mouse-ear cress).